A 452-amino-acid polypeptide reads, in one-letter code: CUGBP Elav-like family member 3 (452 aa).

RRM domains follow at residues 7-88 (IKLF…PADS), 94-174 (RKLF…FADT), and 367-445 (CNIF…LKRP).

This sequence belongs to the CELF/BRUNOL family.

It localises to the nucleus. The protein localises to the cytoplasm. Its function is as follows. RNA-binding protein that may be involved in the regulation of pre-mRNA alternative splicing. This is CUGBP Elav-like family member 3 (celf3) from Danio rerio (Zebrafish).